We begin with the raw amino-acid sequence, 164 residues long: Phosphopantetheine adenylyltransferase (164 aa).

Ser-9 is a substrate binding site. Residues 9–10 (SF) and His-17 each bind ATP. Residues Lys-41, Val-78, and Arg-92 each contribute to the substrate site. Residues 93–95 (GLR), Glu-103, and 128–134 (SRPITAT) each bind ATP.

This sequence belongs to the bacterial CoaD family. In terms of assembly, homohexamer. Requires Mg(2+) as cofactor.

The protein localises to the cytoplasm. It carries out the reaction (R)-4'-phosphopantetheine + ATP + H(+) = 3'-dephospho-CoA + diphosphate. It participates in cofactor biosynthesis; coenzyme A biosynthesis; CoA from (R)-pantothenate: step 4/5. Its function is as follows. Reversibly transfers an adenylyl group from ATP to 4'-phosphopantetheine, yielding dephospho-CoA (dPCoA) and pyrophosphate. In Rhizobium etli (strain ATCC 51251 / DSM 11541 / JCM 21823 / NBRC 15573 / CFN 42), this protein is Phosphopantetheine adenylyltransferase.